A 348-amino-acid chain; its full sequence is A-type ATP synthase subunit C (348 aa).

Belongs to the V-ATPase V0D/AC39 subunit family. As to quaternary structure, has multiple subunits with at least A(3), B(3), C, D, E, F, H, I and proteolipid K(x).

Its subcellular location is the cell membrane. In terms of biological role, component of the A-type ATP synthase that produces ATP from ADP in the presence of a proton gradient across the membrane. This Haloferax volcanii (strain ATCC 29605 / DSM 3757 / JCM 8879 / NBRC 14742 / NCIMB 2012 / VKM B-1768 / DS2) (Halobacterium volcanii) protein is A-type ATP synthase subunit C.